The following is a 644-amino-acid chain: Protein cueball (644 aa).

The N-terminal stretch at 1–26 is a signal peptide; the sequence is MIRIRFGMDVLLVLLLATCLLSPAHG. Residues 27 to 531 are Extracellular-facing; sequence TPLEWDFAVT…VCLTPKVWTS (505 aa). Residues Asn82 and Asn108 are each glycosylated (N-linked (GlcNAc...) asparagine). LDL-receptor class B repeat units follow at residues 121 to 166, 167 to 211, and 212 to 257; these read MNLF…DVCR, RKLY…DQLS, and DRLF…TNDA. Residues Asn175, Asn190, and Asn196 are each glycosylated (N-linked (GlcNAc...) asparagine). An N-linked (GlcNAc...) asparagine glycan is attached at Asn313. EGF-like domains lie at 398-430 and 433-471; these read EIRE…FTGE and EVSV…ARCE. 5 cysteine pairs are disulfide-bonded: Cys402–Cys411, Cys406–Cys421, Cys437–Cys447, Cys441–Cys459, and Cys461–Cys470. Residues Asn473 and Asn508 are each glycosylated (N-linked (GlcNAc...) asparagine). The helical transmembrane segment at 532-552 threads the bilayer; it reads SVIIILVIGIVSSLLLVAVIV. Residues 553–644 lie on the Cytoplasmic side of the membrane; that stretch reads HGIRRLYKPK…LIHNMEDDLY (92 aa).

It belongs to the cueball family.

Its subcellular location is the cell membrane. Functionally, has a role in spermatogenesis and oogenesis. In Drosophila erecta (Fruit fly), this protein is Protein cueball.